The primary structure comprises 273 residues: 4-hydroxy-tetrahydrodipicolinate reductase (273 aa).

Residues 12-17 (GAGGRM) and Glu38 contribute to the NAD(+) site. Arg39 lines the NADP(+) pocket. Residues 102-104 (GTT) and 126-129 (AANF) each bind NAD(+). His159 serves as the catalytic Proton donor/acceptor. His160 serves as a coordination point for (S)-2,3,4,5-tetrahydrodipicolinate. Lys163 serves as the catalytic Proton donor. 169–170 (GT) serves as a coordination point for (S)-2,3,4,5-tetrahydrodipicolinate.

This sequence belongs to the DapB family. In terms of assembly, homotetramer.

It localises to the cytoplasm. The catalysed reaction is (S)-2,3,4,5-tetrahydrodipicolinate + NAD(+) + H2O = (2S,4S)-4-hydroxy-2,3,4,5-tetrahydrodipicolinate + NADH + H(+). It catalyses the reaction (S)-2,3,4,5-tetrahydrodipicolinate + NADP(+) + H2O = (2S,4S)-4-hydroxy-2,3,4,5-tetrahydrodipicolinate + NADPH + H(+). The protein operates within amino-acid biosynthesis; L-lysine biosynthesis via DAP pathway; (S)-tetrahydrodipicolinate from L-aspartate: step 4/4. Catalyzes the conversion of 4-hydroxy-tetrahydrodipicolinate (HTPA) to tetrahydrodipicolinate. The sequence is that of 4-hydroxy-tetrahydrodipicolinate reductase from Klebsiella pneumoniae subsp. pneumoniae (strain ATCC 700721 / MGH 78578).